Here is a 44-residue protein sequence, read N- to C-terminus: Mu-conotoxin-like Cal 12.1.3b (44 aa).

Disulfide bonds link Cys-3/Cys-16, Cys-11/Cys-28, Cys-18/Cys-33, and Cys-27/Cys-38. A 4-hydroxyproline modification is found at Pro-23. 2 positions are modified to 6'-bromotryptophan: Trp-36 and Trp-37. Position 39 is a 4-hydroxyproline (Pro-39). Trp-43 is subject to 6'-bromotryptophan.

As to expression, expressed by the venom duct.

The protein localises to the secreted. Mu-conotoxins block voltage-gated sodium channels. This toxin reversibly blocks voltage-gated sodium channel in cephalopods, with no alteration in the voltage dependence of sodium conductance or on the kinetics of inactivation. The protein is Mu-conotoxin-like Cal 12.1.3b of Californiconus californicus (California cone).